The following is a 310-amino-acid chain: Proline-rich 28 kDa antigen (310 aa).

Positions 1–32 are cleaved as a signal peptide; the sequence is MIQIARTWRVFAGGMATGFIGVVLVTAGKASA. The interval 278–310 is disordered; it reads QAPAPAPGSAPVGLPGQAPGYPPAGTLTPVPPR.

This sequence to M.leprae ML0031.

This chain is Proline-rich 28 kDa antigen (mtc28), found in Mycobacterium bovis (strain ATCC BAA-935 / AF2122/97).